A 337-amino-acid chain; its full sequence is Biotin synthase (337 aa).

Residues 52–281 (ADIQRASLLS…RSRVRLSAGR (230 aa)) form the Radical SAM core domain. Residues Cys67, Cys71, and Cys74 each coordinate [4Fe-4S] cluster. Residues Cys112, Cys144, Cys204, and Arg276 each coordinate [2Fe-2S] cluster.

The protein belongs to the radical SAM superfamily. Biotin synthase family. Homodimer. [4Fe-4S] cluster is required as a cofactor. It depends on [2Fe-2S] cluster as a cofactor.

The enzyme catalyses (4R,5S)-dethiobiotin + (sulfur carrier)-SH + 2 reduced [2Fe-2S]-[ferredoxin] + 2 S-adenosyl-L-methionine = (sulfur carrier)-H + biotin + 2 5'-deoxyadenosine + 2 L-methionine + 2 oxidized [2Fe-2S]-[ferredoxin]. It participates in cofactor biosynthesis; biotin biosynthesis; biotin from 7,8-diaminononanoate: step 2/2. Its function is as follows. Catalyzes the conversion of dethiobiotin (DTB) to biotin by the insertion of a sulfur atom into dethiobiotin via a radical-based mechanism. This is Biotin synthase from Methylobacterium radiotolerans (strain ATCC 27329 / DSM 1819 / JCM 2831 / NBRC 15690 / NCIMB 10815 / 0-1).